The primary structure comprises 188 residues: ESPLPKPVLDTNGKELNPNSSYRIISIGRGALGGDVYLGKSPNSDAPCPDGVFRYNSDVGPSGTPVRFIPLSGGIFEDQLLNIQFNIATVKLCVSYTIWKVGNLNAYFRTMLLETGGTIGQADSSYFKIVKLSNFGYNLLYCPITPPFLCPFCRDDNFCAKVGVVIQNGKRRLALVNENPLDVLFQEV.

Asparagine 19 carries an N-linked (GlcNAc...) asparagine glycan. Cystine bridges form between cysteine 48-cysteine 93, cysteine 142-cysteine 159, and cysteine 150-cysteine 153.

Belongs to the protease inhibitor I3 (leguminous Kunitz-type inhibitor) family.

It is found in the vacuole. Inhibitor of cathepsin D (aspartic protease) and trypsin (serine protease). May protect the plant by inhibiting proteases of invading organisms. This is Aspartic protease inhibitor 11 from Solanum tuberosum (Potato).